A 309-amino-acid polypeptide reads, in one-letter code: GTP cyclohydrolase MptA (309 aa).

Belongs to the GTP cyclohydrolase IV family. Homodimer. Requires Fe(2+) as cofactor.

The enzyme catalyses GTP + H2O = 7,8-dihydroneopterin 2',3'-cyclic phosphate + formate + diphosphate + H(+). The protein operates within cofactor biosynthesis; 5,6,7,8-tetrahydromethanopterin biosynthesis. Converts GTP to 7,8-dihydro-D-neopterin 2',3'-cyclic phosphate, the first intermediate in the biosynthesis of coenzyme methanopterin. This Haloarcula marismortui (strain ATCC 43049 / DSM 3752 / JCM 8966 / VKM B-1809) (Halobacterium marismortui) protein is GTP cyclohydrolase MptA.